Reading from the N-terminus, the 142-residue chain is Putative pre-16S rRNA nuclease (142 aa).

The protein belongs to the YqgF nuclease family.

The protein localises to the cytoplasm. In terms of biological role, could be a nuclease involved in processing of the 5'-end of pre-16S rRNA. In Blochmanniella floridana, this protein is Putative pre-16S rRNA nuclease.